We begin with the raw amino-acid sequence, 357 residues long: Elongation factor Ts (357 aa).

The involved in Mg(2+) ion dislocation from EF-Tu stretch occupies residues 82 to 85 (TDFV).

It belongs to the EF-Ts family.

It localises to the cytoplasm. Associates with the EF-Tu.GDP complex and induces the exchange of GDP to GTP. It remains bound to the aminoacyl-tRNA.EF-Tu.GTP complex up to the GTP hydrolysis stage on the ribosome. The sequence is that of Elongation factor Ts from Campylobacter jejuni subsp. jejuni serotype O:6 (strain 81116 / NCTC 11828).